A 62-amino-acid chain; its full sequence is Photosystem II reaction center protein Z (62 aa).

2 helical membrane-spanning segments follow: residues 8–28 (AVFALIVTSSILLISVPVVFA) and 41–61 (FSGTSLWIGLVFLVGILNSLI).

Belongs to the PsbZ family. In terms of assembly, PSII is composed of 1 copy each of membrane proteins PsbA, PsbB, PsbC, PsbD, PsbE, PsbF, PsbH, PsbI, PsbJ, PsbK, PsbL, PsbM, PsbT, PsbY, PsbZ, Psb30/Ycf12, at least 3 peripheral proteins of the oxygen-evolving complex and a large number of cofactors. It forms dimeric complexes.

The protein resides in the plastid. It is found in the chloroplast thylakoid membrane. In terms of biological role, may control the interaction of photosystem II (PSII) cores with the light-harvesting antenna, regulates electron flow through the 2 photosystem reaction centers. PSII is a light-driven water plastoquinone oxidoreductase, using light energy to abstract electrons from H(2)O, generating a proton gradient subsequently used for ATP formation. The chain is Photosystem II reaction center protein Z from Pisum sativum (Garden pea).